Reading from the N-terminus, the 113-residue chain is UPF0342 protein SpyM3_0545 (113 aa).

This sequence belongs to the UPF0342 family.

The protein is UPF0342 protein SpyM3_0545 of Streptococcus pyogenes serotype M3 (strain ATCC BAA-595 / MGAS315).